Here is a 397-residue protein sequence, read N- to C-terminus: Cytoplasmic tRNA 2-thiolation protein 2 (397 aa).

Belongs to the CTU2/NCS2 family.

It localises to the cytoplasm. Its pathway is tRNA modification; 5-methoxycarbonylmethyl-2-thiouridine-tRNA biosynthesis. Plays a central role in 2-thiolation of mcm(5)S(2)U at tRNA wobble positions of tRNA(Lys), tRNA(Glu) and tRNA(Gln). May act by forming a heterodimer with NCS6/CTU1 that ligates sulfur from thiocarboxylated URM1 onto the uridine of tRNAs at wobble position. The polypeptide is Cytoplasmic tRNA 2-thiolation protein 2 (Drosophila grimshawi (Hawaiian fruit fly)).